Here is a 270-residue protein sequence, read N- to C-terminus: ATP synthase subunit delta (270 aa).

Belongs to the ATPase delta chain family. F-type ATPases have 2 components, F(1) - the catalytic core - and F(0) - the membrane proton channel. F(1) has five subunits: alpha(3), beta(3), gamma(1), delta(1), epsilon(1). F(0) has three main subunits: a(1), b(2) and c(10-14). The alpha and beta chains form an alternating ring which encloses part of the gamma chain. F(1) is attached to F(0) by a central stalk formed by the gamma and epsilon chains, while a peripheral stalk is formed by the delta and b chains.

The protein localises to the cell membrane. Its function is as follows. F(1)F(0) ATP synthase produces ATP from ADP in the presence of a proton or sodium gradient. F-type ATPases consist of two structural domains, F(1) containing the extramembraneous catalytic core and F(0) containing the membrane proton channel, linked together by a central stalk and a peripheral stalk. During catalysis, ATP synthesis in the catalytic domain of F(1) is coupled via a rotary mechanism of the central stalk subunits to proton translocation. In terms of biological role, this protein is part of the stalk that links CF(0) to CF(1). It either transmits conformational changes from CF(0) to CF(1) or is implicated in proton conduction. The chain is ATP synthase subunit delta from Kocuria rhizophila (strain ATCC 9341 / DSM 348 / NBRC 103217 / DC2201).